A 238-amino-acid polypeptide reads, in one-letter code: MGHEDAVYLAKLAEQAERYEEMVENMKVVASADVELTVEERNLLSVAYKNVIGARRASWRIVTSIEQKEESKGNESQVTLIKEYRQKIESELAKICDDILEVLDKHLIPSAQSGESKVFYHKMKGDYHRYLAEFAIGDRRKGAADASLEAYKAATEVAQTDLAPTHPIRLGLALNFSVFYYEILNSPDQACHLAKLAFDDAIAELDTLSEESYKDSTLIMQLLRDNLTLWTSSEPSRC.

Belongs to the 14-3-3 family.

14-3-3 family protein that plays a role in the morphological differentiation and secondary metabolism biosynthesis. Required for normal fungal morphogenesis in an environment-dependent manner, affecting the balance between production of conidiophores and the formation of sclerotia, resistant structures that are necessary for the dissemination and survival. Acts as a positive regulator of conidiation and a negative regulator of sclerotial production. Also regulates the production of secondary metabolites such as aflatoxin, but also the indole-tetramic acid mycotoxin cyclopiazonic acid (CPA) and ustiloxin, an inhibitor of microtubule assembly. This is 14-3-3 family protein artA from Aspergillus flavus (strain ATCC 200026 / FGSC A1120 / IAM 13836 / NRRL 3357 / JCM 12722 / SRRC 167).